A 188-amino-acid chain; its full sequence is Large ribosomal subunit protein uL6 (188 aa).

The protein belongs to the universal ribosomal protein uL6 family. As to quaternary structure, part of the 50S ribosomal subunit.

This protein binds to the 23S rRNA, and is important in its secondary structure. It is located near the subunit interface in the base of the L7/L12 stalk, and near the tRNA binding site of the peptidyltransferase center. The sequence is that of Large ribosomal subunit protein uL6 from Myxococcus xanthus (strain DK1622).